The chain runs to 447 residues: Putative short-chain fatty acid transporter (447 aa).

The next 11 helical transmembrane spans lie at Leu17–Gly37, Met49–Val69, Val98–Val118, Tyr136–Gly156, Thr188–Ile208, Phe252–Asn272, Ile284–Ile304, Ala321–Ile341, Phe359–Ile379, Trp402–Val422, and Gly427–Leu447.

It is found in the cell inner membrane. Functionally, may be responsible for the uptake of short-chain fatty acids. The chain is Putative short-chain fatty acid transporter (atoE) from Haemophilus influenzae (strain ATCC 51907 / DSM 11121 / KW20 / Rd).